The chain runs to 195 residues: Imidazoleglycerol-phosphate dehydratase (195 aa).

The protein belongs to the imidazoleglycerol-phosphate dehydratase family.

It localises to the cytoplasm. The enzyme catalyses D-erythro-1-(imidazol-4-yl)glycerol 3-phosphate = 3-(imidazol-4-yl)-2-oxopropyl phosphate + H2O. The protein operates within amino-acid biosynthesis; L-histidine biosynthesis; L-histidine from 5-phospho-alpha-D-ribose 1-diphosphate: step 6/9. In Polynucleobacter necessarius subsp. necessarius (strain STIR1), this protein is Imidazoleglycerol-phosphate dehydratase.